The chain runs to 328 residues: Ribosomal RNA large subunit methyltransferase F (328 aa).

The segment at 1 to 31 (MTDTRKPPRKKPQRPAKPAAPREKATLHPRN) is disordered.

The protein belongs to the methyltransferase superfamily. METTL16/RlmF family.

It is found in the cytoplasm. The enzyme catalyses adenosine(1618) in 23S rRNA + S-adenosyl-L-methionine = N(6)-methyladenosine(1618) in 23S rRNA + S-adenosyl-L-homocysteine + H(+). In terms of biological role, specifically methylates the adenine in position 1618 of 23S rRNA. This Pseudomonas savastanoi pv. phaseolicola (strain 1448A / Race 6) (Pseudomonas syringae pv. phaseolicola (strain 1448A / Race 6)) protein is Ribosomal RNA large subunit methyltransferase F.